A 181-amino-acid chain; its full sequence is Cytochrome c oxidase subunit 2 (181 aa).

Residues Cys-126, Glu-128, Cys-130, His-134, and Met-137 each coordinate Cu cation. Glu-128 provides a ligand contact to Mg(2+).

It belongs to the cytochrome c oxidase subunit 2 family. As to quaternary structure, component of the cytochrome c oxidase (complex IV, CIV), a multisubunit enzyme composed of a catalytic core of 3 subunits and several supernumerary subunits. The complex exists as a monomer or a dimer and forms supercomplexes (SCs) in the inner mitochondrial membrane with ubiquinol-cytochrome c oxidoreductase (cytochrome b-c1 complex, complex III, CIII). Cu cation is required as a cofactor.

Its subcellular location is the mitochondrion inner membrane. It catalyses the reaction 4 Fe(II)-[cytochrome c] + O2 + 8 H(+)(in) = 4 Fe(III)-[cytochrome c] + 2 H2O + 4 H(+)(out). Component of the cytochrome c oxidase, the last enzyme in the mitochondrial electron transport chain which drives oxidative phosphorylation. The respiratory chain contains 3 multisubunit complexes succinate dehydrogenase (complex II, CII), ubiquinol-cytochrome c oxidoreductase (cytochrome b-c1 complex, complex III, CIII) and cytochrome c oxidase (complex IV, CIV), that cooperate to transfer electrons derived from NADH and succinate to molecular oxygen, creating an electrochemical gradient over the inner membrane that drives transmembrane transport and the ATP synthase. Cytochrome c oxidase is the component of the respiratory chain that catalyzes the reduction of oxygen to water. Electrons originating from reduced cytochrome c in the intermembrane space (IMS) are transferred via the dinuclear copper A center (CU(A)) of subunit 2 and heme A of subunit 1 to the active site in subunit 1, a binuclear center (BNC) formed by heme A3 and copper B (CU(B)). The BNC reduces molecular oxygen to 2 water molecules using 4 electrons from cytochrome c in the IMS and 4 protons from the mitochondrial matrix. The polypeptide is Cytochrome c oxidase subunit 2 (COII) (Paramecium primaurelia).